We begin with the raw amino-acid sequence, 438 residues long: Protein kinase PINOID (438 aa).

Positions 1-24 (MLRESDGEMSLGTTNSPISSGTES) are disordered. The span at 11–24 (LGTTNSPISSGTES) shows a compositional bias: polar residues. One can recognise a Protein kinase domain in the interval 75–394 (FRLMRRIGAG…AAEVKVHPFF (320 aa)). ATP contacts are provided by residues 81-89 (IGAGDIGTV) and lysine 109. Catalysis depends on aspartate 205, which acts as the Proton acceptor. Residues 395 to 438 (KGLNFALIRTLTPPEIPSSVVKKPMKSATFSGRSSNKPAAFDYF) form the AGC-kinase C-terminal domain.

Belongs to the protein kinase superfamily. Ser/Thr protein kinase family. In terms of assembly, interacts with PDK1, CML12 and PBP1. Component of a complex made of PINs (e.g. PIN1 and PIN2), MAB4/MELs (e.g. NPY1/MAB4 and NPY5/MEL1) and AGC kinases (e.g. D6PK and PID) at the plasma membrane. Binds directly to PIN2, NPY1/MAB4 and NPY5/MEL1. Autophosphorylated. Phosphorylated by PDK1. As to expression, expressed in root hair cells, shoot xylem parenchyma cells and endodermis around the vasculature. Expressed in anther primordia, vasculature of the growing flower stalk, young pedicels and bracts and developing sepals, but not in petals. In pistils, transiently expressed in the vasculature of the style and the septum, and in the integuments and funiculus of the developing ovule.

It is found in the cytoplasm. The protein resides in the cytosol. The protein localises to the cell membrane. It carries out the reaction L-seryl-[protein] + ATP = O-phospho-L-seryl-[protein] + ADP + H(+). The catalysed reaction is L-threonyl-[protein] + ATP = O-phospho-L-threonyl-[protein] + ADP + H(+). With respect to regulation, activated by magnesium and PDK1. Inhibited by staurosporine. Repressed by calcium. Serine/threonine-protein kinase involved in the regulation of auxin signaling. Acts as a positive regulator of cellular auxin efflux and regulates organ development by enhancing polar auxin transport. Phosphorylates conserved serine residues in the PIN auxin efflux carriers. Phosphorylation of PIN proteins is required and sufficient for apical-basal PIN polarity that enables directional intercellular auxin fluxes, which mediate differential growth, tissue patterning and organogenesis. Phosphorylates PIN proteins (e.g. PIN1 and PIN2), especially when NPY proteins (e.g. NPY1/MAB4 and NPY5/MEL1) are recruited at the plasma membrane; this enhances the polarized localizations (apical or basal) of PINs in the cell by limiting their lateral diffusion-based escape. Acts in association with PIN1 to control the establishment of bilateral symmetry and promotion of cotyledon outgrowth. Regulates root gravitropism through modulation of PIN2-dependent basipetal auxin transport. Required for polarization of PIN3-dependent auxin transport for hypocotyl gravitropic response. The protein kinase activity of PID is essential for its auxin efflux regulatory function. PID kinase and PP2A phosphatase activities antagonistically regulate phosphorylation of PIN proteins, affecting PIN sorting. The chain is Protein kinase PINOID from Arabidopsis thaliana (Mouse-ear cress).